Here is a 190-residue protein sequence, read N- to C-terminus: Small ribosomal subunit protein eS7A (190 aa).

S2 carries the N-acetylserine modification. Residues K83, K84, and K124 each participate in a glycyl lysine isopeptide (Lys-Gly) (interchain with G-Cter in ubiquitin) cross-link.

This sequence belongs to the eukaryotic ribosomal protein eS7 family. Component of the small ribosomal subunit (SSU). Mature yeast ribosomes consist of a small (40S) and a large (60S) subunit. The 40S small subunit contains 1 molecule of ribosomal RNA (18S rRNA) and 33 different proteins (encoded by 57 genes). The large 60S subunit contains 3 rRNA molecules (25S, 5.8S and 5S rRNA) and 46 different proteins (encoded by 81 genes). Interacts with snoRNA U3. uS11 interacts with MPP10. Component of the ribosomal small subunit (SSU) processome composed of at least 40 protein subunits and snoRNA U3. Post-translationally, N-terminally acetylated by acetyltransferase NatA. Ubiquitinated at Lys-83 and Lys-84 in response to stalled ribosomes, leading to activation of the No-Go Decay (NGD) pathway: first monoubiquitinated by MOT2/NOT4, followed by formation by HEL2 of 'Lys-63'-linked polyubiquitin chains on monoubiquitin.

It is found in the cytoplasm. The protein localises to the nucleus. It localises to the nucleolus. Component of the ribosome, a large ribonucleoprotein complex responsible for the synthesis of proteins in the cell. The small ribosomal subunit (SSU) binds messenger RNAs (mRNAs) and translates the encoded message by selecting cognate aminoacyl-transfer RNA (tRNA) molecules. The large subunit (LSU) contains the ribosomal catalytic site termed the peptidyl transferase center (PTC), which catalyzes the formation of peptide bonds, thereby polymerizing the amino acids delivered by tRNAs into a polypeptide chain. The nascent polypeptides leave the ribosome through a tunnel in the LSU and interact with protein factors that function in enzymatic processing, targeting, and the membrane insertion of nascent chains at the exit of the ribosomal tunnel. eS7 is involved in nucleolar processing of pre-18S ribosomal RNA and ribosome assembly. This chain is Small ribosomal subunit protein eS7A, found in Saccharomyces cerevisiae (strain ATCC 204508 / S288c) (Baker's yeast).